Consider the following 357-residue polypeptide: Peptide chain release factor 1 (357 aa).

The residue at position 234 (glutamine 234) is an N5-methylglutamine. Residues 283-313 (SKKQEQRSSNRKQQVGSGDRSERIRTYNFPQ) form a disordered region.

The protein belongs to the prokaryotic/mitochondrial release factor family. Methylated by PrmC. Methylation increases the termination efficiency of RF1.

Its subcellular location is the cytoplasm. In terms of biological role, peptide chain release factor 1 directs the termination of translation in response to the peptide chain termination codons UAG and UAA. The sequence is that of Peptide chain release factor 1 (prfA) from Borreliella burgdorferi (strain ATCC 35210 / DSM 4680 / CIP 102532 / B31) (Borrelia burgdorferi).